Here is a 215-residue protein sequence, read N- to C-terminus: 2-phospho-L-lactate guanylyltransferase (215 aa).

Belongs to the CofC family. In terms of assembly, homodimer.

The catalysed reaction is (2S)-2-phospholactate + GTP + H(+) = (2S)-lactyl-2-diphospho-5'-guanosine + diphosphate. It participates in cofactor biosynthesis; coenzyme F420 biosynthesis. In terms of biological role, guanylyltransferase that catalyzes the activation of (2S)-2-phospholactate (2-PL) as (2S)-lactyl-2-diphospho-5'-guanosine, via the condensation of 2-PL with GTP. It is involved in the biosynthesis of coenzyme F420, a hydride carrier cofactor. This is 2-phospho-L-lactate guanylyltransferase from Methanoculleus marisnigri (strain ATCC 35101 / DSM 1498 / JR1).